A 258-amino-acid chain; its full sequence is Deoxyribose-phosphate aldolase (258 aa).

Asp101 functions as the Proton donor/acceptor in the catalytic mechanism. The active-site Schiff-base intermediate with acetaldehyde is Lys166. Residue Lys200 is the Proton donor/acceptor of the active site.

It belongs to the DeoC/FbaB aldolase family. DeoC type 2 subfamily.

The protein localises to the cytoplasm. The catalysed reaction is 2-deoxy-D-ribose 5-phosphate = D-glyceraldehyde 3-phosphate + acetaldehyde. It participates in carbohydrate degradation; 2-deoxy-D-ribose 1-phosphate degradation; D-glyceraldehyde 3-phosphate and acetaldehyde from 2-deoxy-alpha-D-ribose 1-phosphate: step 2/2. Catalyzes a reversible aldol reaction between acetaldehyde and D-glyceraldehyde 3-phosphate to generate 2-deoxy-D-ribose 5-phosphate. This chain is Deoxyribose-phosphate aldolase, found in Actinobacillus pleuropneumoniae serotype 7 (strain AP76).